Reading from the N-terminus, the 308-residue chain is Olfactory receptor 2D2 (308 aa).

Residues 1–25 (MRQINQTQVTEFLLLGLSDGPHTEQ) are Extracellular-facing. N5 carries N-linked (GlcNAc...) asparagine glycosylation. The chain crosses the membrane as a helical span at residues 26–49 (LLFIVLLGVYLVTVLGNLLLISLV). Residues 50–57 (HVDSQLHT) lie on the Cytoplasmic side of the membrane. A helical membrane pass occupies residues 58-79 (PMYFFLCNLSLADLCFSTNIVP). Topologically, residues 80-100 (QALVHLLSRKKVIAFTLCAAR) are extracellular. Residues 101-120 (LLFFLIFGCTQCALLAVMSY) traverse the membrane as a helical segment. Over 121 to 139 (DRYVAICNPLRYPNIMTWK) the chain is Cytoplasmic. Residues 140-158 (VCVQLATGSWTSGILVSVV) form a helical membrane-spanning segment. Residues 159–195 (DTTFILRLPYRGSNSIAHFFCEAPALLILASTDTHAS) lie on the Extracellular side of the membrane. Residues 196–219 (EMAIFLMGVVILLIPVFLILVSYG) traverse the membrane as a helical segment. Residues 220 to 236 (RIIVTVVKMKSTVGSLK) are Cytoplasmic-facing. A helical membrane pass occupies residues 237–259 (AFSTCGSHLMVVILFYGSAIITY). Over 260–270 (MTPKSSKQQEK) the chain is Extracellular. A helical membrane pass occupies residues 271 to 290 (SVSVFYAIVTPMLNPLIYSL). Residues 291–308 (RNKDVKAALRKVATRNFP) lie on the Cytoplasmic side of the membrane.

This sequence belongs to the G-protein coupled receptor 1 family.

Its subcellular location is the cell membrane. In terms of biological role, odorant receptor. In Homo sapiens (Human), this protein is Olfactory receptor 2D2 (OR2D2).